Here is a 136-residue protein sequence, read N- to C-terminus: Galectin-7 (136 aa).

Residues 6-136 (HKTPLPQGVR…DVQLHSVKIF (131 aa)) form the Galectin domain. Position 70–76 (70–76 (WGREERG)) interacts with a beta-D-galactoside.

Monomer.

It is found in the cytoplasm. The protein resides in the nucleus. Its subcellular location is the secreted. Its function is as follows. Could be involved in cell-cell and/or cell-matrix interactions necessary for normal growth control. Pro-apoptotic protein that functions intracellularly upstream of JNK activation and cytochrome c release. The protein is Galectin-7 (Lgals7) of Rattus norvegicus (Rat).